Here is a 188-residue protein sequence, read N- to C-terminus: UPF0340 protein SSU98_0310 (188 aa).

It belongs to the UPF0340 family.

In Streptococcus suis (strain 98HAH33), this protein is UPF0340 protein SSU98_0310.